A 412-amino-acid chain; its full sequence is Histone-lysine N-methyltransferase SUV39H1 (412 aa).

Positions 1 to 89 are interaction with SIRT1; the sequence is MAENLKGCSV…LKCVRILKQF (89 aa). One can recognise a Chromo domain in the interval 43 to 101; sequence FEVEYLCDYKKIREQEYYLVKWRGYPDSESTWEPRQNLKCVRILKQFHKDLERELLRRH. The region spanning 179–240 is the Pre-SET domain; it reads VGCECQDCLW…DCPNRVVQKG (62 aa). Zn(2+) contacts are provided by Cys-181, Cys-183, Cys-186, Cys-194, Cys-195, Cys-222, Cys-226, Cys-228, and Cys-232. The region spanning 243–366 is the SET domain; it reads YDLCIFRTDD…AGEELTFDYN (124 aa). 254–256 lines the S-adenosyl-L-methionine pocket; sequence RGW. The tract at residues 255-377 is mediates interaction with MECOM; the sequence is GWGVRTLEKI…QVDPVDMEST (123 aa). N6-acetyllysine is present on Lys-266. S-adenosyl-L-methionine-binding positions include Tyr-297 and 323–324; that span reads NH. Cys-326 is a Zn(2+) binding site. The residue at position 391 (Ser-391) is a Phosphoserine. Residues 396–412 enclose the Post-SET domain; sequence VRIECKCGTESCRKYLF. Residues Cys-400, Cys-402, and Cys-407 each coordinate Zn(2+).

This sequence belongs to the class V-like SAM-binding methyltransferase superfamily. Histone-lysine methyltransferase family. Suvar3-9 subfamily. As to quaternary structure, interacts with H3 and H4 histones. Interacts with GFI1B, DNMT3B, CBX1, CBX4, CCAR2, MBD1, RUNX1, RUNX3, MYOD1, SMAD5 and RB1. Interacts with SBF1 through the SET domain. Interacts with HDAC1 and HDAC2 through the N-terminus and associates with the core histone deacetylase complex composed of HDAC1, HDAC2, RBBP4 and RBBP7. Component of the eNoSC complex, composed of SIRT1, SUV39H1 and RRP8. Interacts (via SET domain) with MECOM; enhances MECOM transcriptional repression activity. Interacts with LMNA; the interaction increases stability of SUV39H1. The large PER complex involved in the histone methylation is composed of at least PER2, CBX3, TRIM28, SUV39H1 and/or SUV39H2; CBX3 mediates the formation of the complex. (Microbial infection) Interacts with HTLV-1 Tax protein, leading to abrogate Tax transactivation of HTLV-1 LTR. Phosphorylated on serine residues, and to a lesser degree, on threonine residues. The phosphorylated form is stabilized by SBF1 and is less active in its transcriptional repressor function. In terms of processing, ubiquitinated by the DCX(DCAF13) E3 ubiquitin ligase complex, leading to its degradation. Post-translationally, acetylated at Lys-266, leading to inhibition of enzyme activity. SIRT1-mediated deacetylation relieves this inhibition. (Microbial infection) A higher molecular weight form is also seen in M.bovis infected cells.

It localises to the nucleus. The protein resides in the nucleus lamina. Its subcellular location is the nucleoplasm. The protein localises to the chromosome. It is found in the centromere. It localises to the cytoplasmic vesicle. The protein resides in the phagosome lumen. Its subcellular location is the cell membrane. The catalysed reaction is L-lysyl(9)-[histone H3] + 3 S-adenosyl-L-methionine = N(6),N(6),N(6)-trimethyl-L-lysyl(9)-[histone H3] + 3 S-adenosyl-L-homocysteine + 3 H(+). With respect to regulation, inhibited by S-adenosyl-L-homocysteine. Negatively regulated by CCAR2. Its function is as follows. Histone methyltransferase that specifically trimethylates 'Lys-9' of histone H3 using monomethylated H3 'Lys-9' as substrate. Also weakly methylates histone H1 (in vitro). H3 'Lys-9' trimethylation represents a specific tag for epigenetic transcriptional repression by recruiting HP1 (CBX1, CBX3 and/or CBX5) proteins to methylated histones. Mainly functions in heterochromatin regions, thereby playing a central role in the establishment of constitutive heterochromatin at pericentric and telomere regions. H3 'Lys-9' trimethylation is also required to direct DNA methylation at pericentric repeats. SUV39H1 is targeted to histone H3 via its interaction with RB1 and is involved in many processes, such as repression of MYOD1-stimulated differentiation, regulation of the control switch for exiting the cell cycle and entering differentiation, repression by the PML-RARA fusion protein, BMP-induced repression, repression of switch recombination to IgA and regulation of telomere length. Component of the eNoSC (energy-dependent nucleolar silencing) complex, a complex that mediates silencing of rDNA in response to intracellular energy status and acts by recruiting histone-modifying enzymes. The eNoSC complex is able to sense the energy status of cell: upon glucose starvation, elevation of NAD(+)/NADP(+) ratio activates SIRT1, leading to histone H3 deacetylation followed by dimethylation of H3 at 'Lys-9' (H3K9me2) by SUV39H1 and the formation of silent chromatin in the rDNA locus. Recruited by the large PER complex to the E-box elements of the circadian target genes such as PER2 itself or PER1, contributes to the conversion of local chromatin to a heterochromatin-like repressive state through H3 'Lys-9' trimethylation. (Microbial infection) Plays a role in defense against mycobacterial infections. Methylates M.tuberculosis HupB on 'Lys-140', probably methylates HupB of M.bovis also. Methylation has an inhibitory effect on mycobacterial growth in the host. Macrophages expressing about 60% SUV39H1 are slightly more susceptible to M.bovis or M.tuberculosis infection. Chaetocin (an inhibitor of this enzyme) increases macrophage survival of M.tuberculosis. This protein inhibits biofilm formation by M.tuberculosis via 'Lys-140' trimethylation. This is Histone-lysine N-methyltransferase SUV39H1 (SUV39H1) from Homo sapiens (Human).